Here is an 81-residue protein sequence, read N- to C-terminus: Cytochrome c oxidase subunit NDUFA4 (81 aa).

Residues 1-14 are Mitochondrial matrix-facing; sequence MLRQIIGQAKKHPS. At lysine 10 the chain carries N6-acetyllysine. The chain crosses the membrane as a helical span at residues 15-37; that stretch reads LIPLFVFIGTGATGATLYLLRLA. Residues 38 to 81 are Mitochondrial intermembrane-facing; that stretch reads LFNPDVCWDRNNPEPWNKLGPNDQYKFYSVNVDYSKLKKERPDF. Residue serine 66 is modified to Phosphoserine.

It belongs to the complex IV NDUFA4 subunit family. Component of the cytochrome c oxidase (complex IV, CIV), a multisubunit enzyme composed of 14 subunits. The complex is composed of a catalytic core of 3 subunits MT-CO1, MT-CO2 and MT-CO3, encoded in the mitochondrial DNA, and 11 supernumerary subunits COX4I1 (or COX4I2), COX5A, COX5B, COX6A1 (or COX6A2), COX6B1 (or COX6B2), COX6C, COX7A2 (or COX7A1), COX7B, COX7C, COX8A and NDUFA4, which are encoded in the nuclear genome. The complex exists as a monomer or a dimer and forms supercomplexes (SCs) in the inner mitochondrial membrane with NADH-ubiquinone oxidoreductase (complex I, CI) and ubiquinol-cytochrome c oxidoreductase (cytochrome b-c1 complex, complex III, CIII), resulting in different assemblies (supercomplex SCI(1)III(2)IV(1) and megacomplex MCI(2)III(2)IV(2)). Interacts with RAB5IF. Interacts with FLVCR2; this interaction occurs in the absence of heme and is disrupted upon heme binding.

It is found in the mitochondrion inner membrane. Its function is as follows. Component of the cytochrome c oxidase, the last enzyme in the mitochondrial electron transport chain which drives oxidative phosphorylation. The respiratory chain contains 3 multisubunit complexes succinate dehydrogenase (complex II, CII), ubiquinol-cytochrome c oxidoreductase (cytochrome b-c1 complex, complex III, CIII) and cytochrome c oxidase (complex IV, CIV), that cooperate to transfer electrons derived from NADH and succinate to molecular oxygen, creating an electrochemical gradient over the inner membrane that drives transmembrane transport and the ATP synthase. Cytochrome c oxidase is the component of the respiratory chain that catalyzes the reduction of oxygen to water. Electrons originating from reduced cytochrome c in the intermembrane space (IMS) are transferred via the dinuclear copper A center (CU(A)) of subunit 2 and heme A of subunit 1 to the active site in subunit 1, a binuclear center (BNC) formed by heme A3 and copper B (CU(B)). The BNC reduces molecular oxygen to 2 water molecules unsing 4 electrons from cytochrome c in the IMS and 4 protons from the mitochondrial matrix. NDUFA4 is required for complex IV maintenance. The sequence is that of Cytochrome c oxidase subunit NDUFA4 (NDUFA4) from Homo sapiens (Human).